The chain runs to 91 residues: MKPNIHPDNYRTVLFFDSSANEGWLIRSCAETHGKTMVWTDGKEYPLFSLDTSSASHPVYTGKQRNVNTEGHASKFNQRFQSVMSSFRKDK.

Belongs to the bacterial ribosomal protein bL31 family. Type B subfamily. As to quaternary structure, part of the 50S ribosomal subunit.

This is Large ribosomal subunit protein bL31B from Neisseria meningitidis serogroup A / serotype 4A (strain DSM 15465 / Z2491).